The chain runs to 107 residues: Iron-binding protein IscA (107 aa).

Fe cation is bound by residues cysteine 35, cysteine 99, and cysteine 101.

This sequence belongs to the HesB/IscA family. As to quaternary structure, homodimer; may form tetramers and higher multimers. It depends on Fe cation as a cofactor.

Is able to transfer iron-sulfur clusters to apo-ferredoxin. Multiple cycles of [2Fe2S] cluster formation and transfer are observed, suggesting that IscA acts catalytically. Recruits intracellular free iron so as to provide iron for the assembly of transient iron-sulfur cluster in IscU in the presence of IscS, L-cysteine and the thioredoxin reductase system TrxA/TrxB. In Salmonella agona (strain SL483), this protein is Iron-binding protein IscA.